The primary structure comprises 558 residues: Formate--tetrahydrofolate ligase (558 aa).

An ATP-binding site is contributed by 66-73 (TPAGEGKT).

It belongs to the formate--tetrahydrofolate ligase family.

The enzyme catalyses (6S)-5,6,7,8-tetrahydrofolate + formate + ATP = (6R)-10-formyltetrahydrofolate + ADP + phosphate. The protein operates within one-carbon metabolism; tetrahydrofolate interconversion. In Neisseria gonorrhoeae (strain NCCP11945), this protein is Formate--tetrahydrofolate ligase.